Consider the following 111-residue polypeptide: Toxin 3FTx-Tri2 (111 aa).

Residues 1–19 form the signal peptide; sequence MKTLLLALVVLAFVCLGSA. The propeptide occupies 20–34; the sequence is DQVGLGKEQIDRGRR. Gln-35 bears the Pyrrolidone carboxylic acid mark. 5 disulfides stabilise this stretch: Cys-44/Cys-68, Cys-47/Cys-55, Cys-61/Cys-87, Cys-91/Cys-102, and Cys-103/Cys-108.

This sequence belongs to the three-finger toxin family. Ancestral subfamily. Boigatoxin sub-subfamily. Expressed by the venom gland.

It localises to the secreted. Its function is as follows. Potent postsynaptic neurotoxin. Displays readily reversible competitive antagonism at the nicotinic acetylcholine receptor (nAChR). This is Toxin 3FTx-Tri2 from Trimorphodon biscutatus (Western lyre snake).